The sequence spans 319 residues: L-threo-3-hydroxyaspartate ammonia-lyase (319 aa).

Position 53 is an N6-(pyridoxal phosphate)lysine (Lys53). Residues Asn80, 179-183, and Thr304 contribute to the pyridoxal 5'-phosphate site; that span reads GGGGM.

It belongs to the serine/threonine dehydratase family. As to quaternary structure, may be either a monomer or a homodimer. Requires pyridoxal 5'-phosphate as cofactor. Mn(2+) serves as cofactor. It depends on Mg(2+) as a cofactor. The cofactor is Ca(2+).

It carries out the reaction (3S)-3-hydroxy-L-aspartate = oxaloacetate + NH4(+). With respect to regulation, is strongly inhibited by hydroxylamine and EDTA in vitro. In terms of biological role, catalyzes the deamination of L-threo-3-hydroxyaspartate to oxaloacetate and ammonia. Shows a high specificity towards L-threo-3-hydroxyaspartate as other 3-hydroxyaminoacids, i.e. D,L-erythro- and D-threo-3-hydroxyaspartate, D-threonine, L-threonine, D,L-allothreonine, D,L-threo-3-phenylserine, D-serine, and L-serine, are not substrates for this enzyme. Exhibits no detectable serine and aspartate racemase activity. Might play a role in the detoxification of naturally occurring 3-hydroxyaspartate in Pseudomonas sp. T62 cells. This is L-threo-3-hydroxyaspartate ammonia-lyase from Pseudomonas sp.